We begin with the raw amino-acid sequence, 256 residues long: Triosephosphate isomerase (256 aa).

12-14 (NWK) is a binding site for substrate. Histidine 99 serves as the catalytic Electrophile. Catalysis depends on glutamate 169, which acts as the Proton acceptor. Residues glycine 175, serine 214, and 235 to 236 (GG) contribute to the substrate site.

The protein belongs to the triosephosphate isomerase family. As to quaternary structure, homodimer.

The protein localises to the cytoplasm. The enzyme catalyses D-glyceraldehyde 3-phosphate = dihydroxyacetone phosphate. The protein operates within carbohydrate biosynthesis; gluconeogenesis. It participates in carbohydrate degradation; glycolysis; D-glyceraldehyde 3-phosphate from glycerone phosphate: step 1/1. Involved in the gluconeogenesis. Catalyzes stereospecifically the conversion of dihydroxyacetone phosphate (DHAP) to D-glyceraldehyde-3-phosphate (G3P). In Mesorhizobium japonicum (strain LMG 29417 / CECT 9101 / MAFF 303099) (Mesorhizobium loti (strain MAFF 303099)), this protein is Triosephosphate isomerase.